The primary structure comprises 237 residues: Uridylate kinase (237 aa).

9–12 is a binding site for ATP; that stretch reads KLSG. Glycine 51 contacts UMP. The ATP site is built by glycine 52 and arginine 56. UMP-binding positions include aspartate 71 and 132-139; that span reads CGNPFFTT. Threonine 159, tyrosine 165, and aspartate 168 together coordinate ATP.

It belongs to the UMP kinase family. Homohexamer.

The protein resides in the cytoplasm. The catalysed reaction is UMP + ATP = UDP + ADP. It functions in the pathway pyrimidine metabolism; CTP biosynthesis via de novo pathway; UDP from UMP (UMPK route): step 1/1. Inhibited by UTP. Its function is as follows. Catalyzes the reversible phosphorylation of UMP to UDP. In Prochlorococcus marinus (strain SARG / CCMP1375 / SS120), this protein is Uridylate kinase.